A 788-amino-acid chain; its full sequence is Calpastatin (788 aa).

The segment covering 1–11 (MSQPGPKPAAS) has biased composition (pro residues). Disordered stretches follow at residues 1-262 (MSQP…TGPV), 289-493 (LLEK…MCSI), and 514-580 (TLAG…SQEQ). Ser11 is subject to Phosphoserine. Low complexity predominate over residues 12–21 (PRPSRGAAAR). The segment covering 38–49 (PGEKKGSDEKKA) has biased composition (basic and acidic residues). Residues 65 to 87 (AATATKVTASSAATSKSPSMSTT) are compositionally biased toward low complexity. The span at 99-119 (EGPDQKRPREQAVKTESKKPQ) shows a compositional bias: basic and acidic residues. A Glycyl lysine isopeptide (Lys-Gly) (interchain with G-Cter in SUMO2) cross-link involves residue Lys112. Residue Lys129 is modified to N6-acetyllysine. A Phosphoserine modification is found at Ser165. The residue at position 216 (Thr216) is a Phosphothreonine. Position 219 is a phosphoserine (Ser219). Positions 246-256 (GGHEDTNRDDP) are enriched in basic and acidic residues. Residues 251 to 303 (TNRDDPPYTGPVVLDPMYSTYLEALGIKEGTIPPEYRKLLEKNEGITQPLPDS) form an Inhibitory domain 1 repeat. 2 positions are modified to phosphoserine: Ser303 and Ser324. Composition is skewed to polar residues over residues 318–328 (SDFTCSSPTGK) and 369–380 (QALQALSDSLGT). The Inhibitory domain 2 repeat unit spans residues 384–436 (DPPSHVSQAEQVKEAKAKEERQEKCGEDEDTVPAEYRLKPAKDKDGKPLLPEP). 2 stretches are compositionally biased toward basic and acidic residues: residues 394–408 (QVKEAKAKEERQEKC) and 419–430 (YRLKPAKDKDGK). A compositionally biased stretch (low complexity) spans 441-453 (KSLSESELIGELS). 3 positions are modified to phosphoserine: Ser444, Ser446, and Ser453. Thr479 is modified (phosphothreonine). Position 518 is a phosphoserine (Ser518). Residues 522–570 (READPEHEKTVEDKVKEKAKEEEHEKLGEKEETVPPDYRLEEVKDKDGK) show a composition bias toward basic and acidic residues. The stretch at 524-577 (ADPEHEKTVEDKVKEKAKEEEHEKLGEKEETVPPDYRLEEVKDKDGKPLLPKES) is one Inhibitory domain 3 repeat. Phosphoserine is present on residues Ser594, Ser605, Ser653, and Ser655. The interval 620-788 (VVSQTPAPST…PKAKEDARHS (169 aa)) is disordered. One copy of the Inhibitory domain 4 repeat lies at 661–714 (PDPDENKPLDDKVKEKIKPEHSEKLGERDDTIPPEYRHLLDNDGKDKPEKPPTK). Basic and acidic residues-rich tracts occupy residues 661 to 726 (PDPD…RDPI) and 759 to 788 (ASKDGEKTKDSSKKTEEVSKPKAKEDARHS).

This sequence belongs to the protease inhibitor I27 (calpastatin) family. Isoform 2 is the major form in all tissues examined. Isoform 1 accounts for 5-10% in tissues such as skeletal muscle, liver and brain, and 30% in myoblasts. Isoforms 4 and 5 are testis-specific. Isoform 6 is highly expressed in heart and skeletal muscle with lower levels in liver, brain and testis. Isoform 7 is expressed at high levels in liver.

Its function is as follows. Specific inhibition of calpain (calcium-dependent cysteine protease). Plays a key role in postmortem tenderization of meat and have been proposed to be involved in muscle protein degradation in living tissue. The protein is Calpastatin (Cast) of Mus musculus (Mouse).